Reading from the N-terminus, the 198-residue chain is Recombination protein RecR (198 aa).

A C4-type zinc finger spans residues 57 to 72; the sequence is CSICGNLTESDPCAIC. A Toprim domain is found at 80 to 175; it reads TTILVVEESK…KVTRLARGLA (96 aa).

This sequence belongs to the RecR family.

Functionally, may play a role in DNA repair. It seems to be involved in an RecBC-independent recombinational process of DNA repair. It may act with RecF and RecO. The chain is Recombination protein RecR from Lactococcus lactis subsp. cremoris (strain MG1363).